A 595-amino-acid polypeptide reads, in one-letter code: Indole-3-acetic acid-amido synthetase GH3.15 (595 aa).

ATP is bound by residues serine 97–serine 98, threonine 302, and phenylalanine 325–glutamate 330. 2 residues coordinate substrate: phenylalanine 325 and phenylalanine 332. ATP contacts are provided by tyrosine 348 and aspartate 408.

The protein belongs to the IAA-amido conjugating enzyme family. As to expression, expressed in seedlings, roots, and parts of the siliques.

It catalyses the reaction (indol-3-yl)butanoate + L-cysteine + ATP = (indol-3-yl)butanoyl-L-cysteine + AMP + diphosphate + H(+). It carries out the reaction (indol-3-yl)butanoate + L-glutamine + ATP = (indol-3-yl)butanoyl-L-glutamine + AMP + diphosphate + H(+). The catalysed reaction is 4-(2,4-dichlorophenoxy)butanoate + L-glutamine + ATP = 4-(2,4-dichlorophenoxy)butanoyl-L-glutamine + AMP + diphosphate + H(+). Functionally, indole-3-acetic acid-amido (IAA) synthetase that catalyzes the conjugation of amino acids to auxin specifically using the auxin precursor indole-3-butyric acid (IBA) and glutamine and, possibly, cysteine as substrates. Displays high catalytic activity with the auxinic phenoxyalkanoic acid herbicides 4-(2,4-dichlorophenoxy)butyric acid (2,4-DB) and to some extent 2,4-dichlorophenoxylacetic acid (2,4-D) as substrates, thus conferring resistance to herbicides. The polypeptide is Indole-3-acetic acid-amido synthetase GH3.15 (Arabidopsis thaliana (Mouse-ear cress)).